The following is a 331-amino-acid chain: Transmembrane protein 59-like (331 aa).

Positions 1–21 are cleaved as a signal peptide; it reads MAAVALPLLLLLASPATPTPA. The segment at 15-62 is disordered; sequence PATPTPARDPFSPQLGDTQRCQQRCRQRHPGLPPAQPEPEGPSESPNN. Residues 45–54 show a composition bias toward pro residues; the sequence is GLPPAQPEPE. An N-linked (GlcNAc...) asparagine glycan is attached at Asn90. The helical transmembrane segment at 258-278 threads the bilayer; it reads VLFCCLFLSVLIILWLSCCTL. The Microbody targeting signal motif lies at 329–331; the sequence is TTL.

Belongs to the TMEM59 family.

The protein resides in the golgi apparatus membrane. In terms of biological role, modulates the O-glycosylation and complex N-glycosylation steps occurring during the Golgi maturation of APP. Inhibits APP transport to the cell surface and further shedding. This chain is Transmembrane protein 59-like (Tmem59l), found in Rattus norvegicus (Rat).